A 135-amino-acid polypeptide reads, in one-letter code: DNA-directed RNA polymerase subunit omega (135 aa).

The protein belongs to the RNA polymerase subunit omega family. As to quaternary structure, the RNAP catalytic core consists of 2 alpha, 1 beta, 1 beta' and 1 omega subunit. When a sigma factor is associated with the core the holoenzyme is formed, which can initiate transcription.

It catalyses the reaction RNA(n) + a ribonucleoside 5'-triphosphate = RNA(n+1) + diphosphate. Its function is as follows. Promotes RNA polymerase assembly. Latches the N- and C-terminal regions of the beta' subunit thereby facilitating its interaction with the beta and alpha subunits. The sequence is that of DNA-directed RNA polymerase subunit omega from Sinorhizobium medicae (strain WSM419) (Ensifer medicae).